The primary structure comprises 129 residues: DNA base-flipping protein (129 aa).

This sequence belongs to the MGMT family. ATL subfamily. As to quaternary structure, interacts with HelD and UvrA.

Its function is as follows. Involved in DNA damage recognition. Binds DNA containing O(6)-methylguanine and larger O(6)-alkylguanine adducts, and to double-stranded DNA that contains an AP (apurinic/apyrimidinic) site. Binds to the damaged base and flips the base out of the DNA duplex into an extrahelical conformation, which allows processing by repair proteins. Works in partnership with the nucleotide excision repair (NER) pathway to enhance the repair of the O(6)-alkylguanine adducts larger than the methyl adduct. Also prevents methyl-directed mismatch repair (MMR)-mediated attack of the O(6)-alkylguanine:T mispairs for the larger alkyl groups. In Escherichia coli (strain K12), this protein is DNA base-flipping protein.